The following is a 150-amino-acid chain: UPF0336 protein SAV_4901 (150 aa).

The 119-residue stretch at 8-126 folds into the MaoC-like domain; it reads VGRSYPPTDP…GNDVVDVRGE (119 aa).

Belongs to the UPF0336 family.

This Streptomyces avermitilis (strain ATCC 31267 / DSM 46492 / JCM 5070 / NBRC 14893 / NCIMB 12804 / NRRL 8165 / MA-4680) protein is UPF0336 protein SAV_4901.